Reading from the N-terminus, the 355-residue chain is uncharacterized protein (355 aa).

A signal peptide spans 1-22; the sequence is MRLTHVTACICLLVAVAVLFSG.

It belongs to the bacterial solute-binding protein 1 family. WtpA subfamily.

This is an uncharacterized protein from Methanoculleus marisnigri (strain ATCC 35101 / DSM 1498 / JR1).